A 1337-amino-acid chain; its full sequence is Receptor-type tyrosine-protein phosphatase eta (1337 aa).

A signal peptide spans Met1 to Cys35. The Extracellular portion of the chain corresponds to Ala36–Gly975. 2 stretches are compositionally biased toward polar residues: residues Ser67–Asn82 and Ser89–Pro119. Positions Ser67–Asp124 are disordered. 34 N-linked (GlcNAc...) asparagine glycosylation sites follow: Asn72, Asn82, Asn93, Asn104, Asn142, Asn172, Asn192, Asn231, Asn258, Asn278, Asn342, Asn351, Asn376, Asn391, Asn396, Asn413, Asn431, Asn501, Asn525, Asn536, Asn582, Asn603, Asn618, Asn628, Asn637, Asn666, Asn669, Asn761, Asn772, Asn784, Asn790, Asn824, Asn910, and Asn937. Fibronectin type-III domains are found at residues Pro121–Pro209, Pro207–Leu291, Asn271–Thr364, Gln368–Pro456, Val457–Ser541, Ala542–Tyr623, Arg625–Ala720, Ser721–Pro817, and Pro816–Leu902. The interval Asn278–Asp327 is disordered. A helical transmembrane segment spans residues Ala976 to Trp996. Residues Arg997–Ala1337 are Cytoplasmic-facing. Position 1009 is a phosphoserine (Ser1009). The Tyrosine-protein phosphatase domain occupies Phe1041 to Ile1298. Substrate contacts are provided by residues Asp1205, Cys1239–Arg1245, and Gln1283. Cys1239 (phosphocysteine intermediate) is an active-site residue.

The protein belongs to the protein-tyrosine phosphatase family. Receptor class 3 subfamily. Monomer. Interacts with CTNNB1 (phosphorylated) and JUP (phosphorylated). Interacts with FLT3 (phosphorylated). Interacts with GAB1 and GRB2. In terms of processing, N- and O-glycosylated. Post-translationally, N-glycosylated. Expressed in the promyelocytic cell line HL-60, the granulocyte-macrophage colony-stimulating factor-dependent leukemic cell line F-36P, and the IL3 and erythropoietin-dependent leukemic cell line F-36E. Expressed predominantly in epithelial cells and lymphocytes. Enhanced expression at high cell density. As to expression, expressed in the brain.

It localises to the cell membrane. Its subcellular location is the cell projection. It is found in the ruffle membrane. The protein resides in the cell junction. The protein localises to the secreted. It localises to the extracellular space. It catalyses the reaction O-phospho-L-tyrosyl-[protein] + H2O = L-tyrosyl-[protein] + phosphate. Its function is as follows. Tyrosine phosphatase which dephosphorylates or contributes to the dephosphorylation of CTNND1, FLT3, PDGFRB, MET, KDR, LYN, SRC, MAPK1, MAPK3, EGFR, TJP1, OCLN, PIK3R1 and PIK3R2. Plays a role in cell adhesion, migration, proliferation and differentiation. Has a role in megakaryocytes and platelet formation. Involved in vascular development. Regulator of macrophage adhesion and spreading. Positively affects cell-matrix adhesion. Positive regulator of platelet activation and thrombosis. Negative regulator of cell proliferation. Negative regulator of PDGF-stimulated cell migration; through dephosphorylation of PDGFR. Positive regulator of endothelial cell survival, as well as of VEGF-induced SRC and AKT activation; through KDR dephosphorylation. Negative regulator of EGFR signaling pathway; through EGFR dephosphorylation. Enhances the barrier function of epithelial junctions during reassembly. Negatively regulates T-cell receptor (TCR) signaling. Upon T-cell TCR activation, it is up-regulated and excluded from the immunological synapses, while upon T-cell-antigen presenting cells (APC) disengagement, it is no longer excluded and can dephosphorylate PLCG1 and LAT to down-regulate prolongation of signaling. Activates angiogenesis and cell migration. Downregulates the expression of the endothelial adhesion molecules ICAM1 and VCAM1. The protein is Receptor-type tyrosine-protein phosphatase eta (PTPRJ) of Homo sapiens (Human).